The sequence spans 193 residues: Xanthine phosphoribosyltransferase (193 aa).

Xanthine contacts are provided by Leu20 and Asn27. 5-phospho-alpha-D-ribose 1-diphosphate is bound at residue 127–131; it reads AYGNA. Lys155 is a xanthine binding site.

This sequence belongs to the purine/pyrimidine phosphoribosyltransferase family. Xpt subfamily. In terms of assembly, homodimer.

It is found in the cytoplasm. The enzyme catalyses XMP + diphosphate = xanthine + 5-phospho-alpha-D-ribose 1-diphosphate. The protein operates within purine metabolism; XMP biosynthesis via salvage pathway; XMP from xanthine: step 1/1. Functionally, converts the preformed base xanthine, a product of nucleic acid breakdown, to xanthosine 5'-monophosphate (XMP), so it can be reused for RNA or DNA synthesis. This Porphyromonas gingivalis (strain ATCC BAA-308 / W83) protein is Xanthine phosphoribosyltransferase.